A 471-amino-acid chain; its full sequence is Glutamate--tRNA ligase (471 aa).

The 'HIGH' region signature appears at 9–19 (PSPTGYLHVGG). Residues cysteine 98, cysteine 100, cysteine 125, and histidine 127 each coordinate Zn(2+). The 'KMSKS' region motif lies at 237–241 (KLSKR). Lysine 240 provides a ligand contact to ATP.

It belongs to the class-I aminoacyl-tRNA synthetase family. Glutamate--tRNA ligase type 1 subfamily. As to quaternary structure, monomer. Zn(2+) serves as cofactor.

It localises to the cytoplasm. The enzyme catalyses tRNA(Glu) + L-glutamate + ATP = L-glutamyl-tRNA(Glu) + AMP + diphosphate. Its function is as follows. Catalyzes the attachment of glutamate to tRNA(Glu) in a two-step reaction: glutamate is first activated by ATP to form Glu-AMP and then transferred to the acceptor end of tRNA(Glu). The chain is Glutamate--tRNA ligase from Escherichia coli O9:H4 (strain HS).